A 168-amino-acid polypeptide reads, in one-letter code: Large ribosomal subunit protein uL5 (168 aa).

It belongs to the universal ribosomal protein uL5 family. In terms of assembly, part of the 50S ribosomal subunit; contacts the 5S rRNA and probably tRNA. Forms a bridge to the 30S subunit in the 70S ribosome.

In terms of biological role, this is one of the proteins that bind and probably mediate the attachment of the 5S RNA into the large ribosomal subunit, where it forms part of the central protuberance. In the 70S ribosome it contacts protein S13 of the 30S subunit (bridge B1b), connecting the 2 subunits; this bridge is implicated in subunit movement. May contact the P site tRNA; the 5S rRNA and some of its associated proteins might help stabilize positioning of ribosome-bound tRNAs. This is Large ribosomal subunit protein uL5 from Methanosphaera stadtmanae (strain ATCC 43021 / DSM 3091 / JCM 11832 / MCB-3).